A 313-amino-acid chain; its full sequence is Ribosomal RNA small subunit methyltransferase H (313 aa).

Residues 34–36, Asp-54, Phe-81, Asp-102, and Gln-109 contribute to the S-adenosyl-L-methionine site; that span reads GGH. The disordered stretch occupies residues 289–313; that stretch reads IAGPEETDRNPRARSAKLRAAEKLG.

Belongs to the methyltransferase superfamily. RsmH family.

It is found in the cytoplasm. It carries out the reaction cytidine(1402) in 16S rRNA + S-adenosyl-L-methionine = N(4)-methylcytidine(1402) in 16S rRNA + S-adenosyl-L-homocysteine + H(+). Functionally, specifically methylates the N4 position of cytidine in position 1402 (C1402) of 16S rRNA. The protein is Ribosomal RNA small subunit methyltransferase H of Trichlorobacter lovleyi (strain ATCC BAA-1151 / DSM 17278 / SZ) (Geobacter lovleyi).